The following is a 208-amino-acid chain: 3-demethoxyubiquinol 3-hydroxylase (208 aa).

Residues glutamate 57, glutamate 87, histidine 90, glutamate 139, glutamate 171, and histidine 174 each coordinate Fe cation.

It belongs to the COQ7 family. Requires Fe cation as cofactor.

It is found in the cell membrane. It carries out the reaction a 5-methoxy-2-methyl-3-(all-trans-polyprenyl)benzene-1,4-diol + AH2 + O2 = a 3-demethylubiquinol + A + H2O. Its pathway is cofactor biosynthesis; ubiquinone biosynthesis. Functionally, catalyzes the hydroxylation of 2-nonaprenyl-3-methyl-6-methoxy-1,4-benzoquinol during ubiquinone biosynthesis. This Burkholderia vietnamiensis (strain G4 / LMG 22486) (Burkholderia cepacia (strain R1808)) protein is 3-demethoxyubiquinol 3-hydroxylase.